A 426-amino-acid polypeptide reads, in one-letter code: D-ribulose kinase (426 aa).

Residues Asp-8, 12–15 (SGAR), Ser-72, and Asp-221 contribute to the substrate site. ATP is bound by residues Ser-243, Gly-281, and 376–380 (GGAKN).

The protein belongs to the FGGY kinase family. The cofactor is a divalent metal cation.

It carries out the reaction D-ribulose + ATP = D-ribulose 5-phosphate + ADP + H(+). Its function is as follows. Exhibits ATP hydrolysis without substrate. Phosphorylates D-ribulose. The polypeptide is D-ribulose kinase (Synechococcus elongatus (strain ATCC 33912 / PCC 7942 / FACHB-805) (Anacystis nidulans R2)).